We begin with the raw amino-acid sequence, 143 residues long: Transcriptional regulator MraZ (143 aa).

2 consecutive SpoVT-AbrB domains span residues 5 to 47 (THSP…PIRE) and 76 to 119 (ASNE…DAQT).

It belongs to the MraZ family. Forms oligomers.

It localises to the cytoplasm. Its subcellular location is the nucleoid. This is Transcriptional regulator MraZ from Thermobifida fusca (strain YX).